The following is a 92-amino-acid chain: PqqA binding protein (92 aa).

Belongs to the PqqD family. In terms of assembly, monomer. Interacts with PqqE.

It functions in the pathway cofactor biosynthesis; pyrroloquinoline quinone biosynthesis. In terms of biological role, functions as a PqqA binding protein and presents PqqA to PqqE, in the pyrroloquinoline quinone (PQQ) biosynthetic pathway. This Xanthomonas oryzae pv. oryzae (strain MAFF 311018) protein is PqqA binding protein.